The chain runs to 244 residues: MSMLCYTLIIAFLIGIWAAPKSEDNVPLGSPATSDLSDTSCAQTHEGLKTSRNTDQRHPAPKKAEDQELGSAANIIVDPKLFQKRRFQSPRVLFSTQPPPLSRDEQSVEFLDNEDTLNRNIRAKRENHPVHNQGEHSVCDSVSDWVIKTTATDIRGNMVTVMVDINRNNEVYKQYFFETKCRNPNPNPVQSERRGIDSRLWNSYCTTTQTFVRALTMEGNQASWRFIRIDTACVCVIIRKTDNF.

The first 18 residues, 1–18 (MSMLCYTLIIAFLIGIWA), serve as a signal peptide directing secretion. The propeptide occupies 19–125 (APKSEDNVPL…TLNRNIRAKR (107 aa)). Residues 47–66 (GLKTSRNTDQRHPAPKKAED) show a composition bias toward basic and acidic residues. Positions 47–69 (GLKTSRNTDQRHPAPKKAEDQEL) are disordered. Cystine bridges form between Cys-139–Cys-205 and Cys-181–Cys-233.

The protein belongs to the NGF-beta family. Homodimer; non-covalently linked. As to expression, expressed by the venom gland.

The protein resides in the secreted. Its function is as follows. Nerve growth factor is important for the development and maintenance of the sympathetic and sensory nervous systems. It stimulates division and differentiation of sympathetic and embryonic sensory neurons as well as basal forebrain cholinergic neurons in the brain. Its relevance in the snake venom is not clear. However, it has been shown to inhibit metalloproteinase-dependent proteolysis of platelet glycoprotein Ib alpha, suggesting a metalloproteinase inhibition to prevent metalloprotease autodigestion and/or protection against prey proteases. Binds a lipid between the two protein chains in the homodimer. The lipid-bound form promotes histamine relase from mouse mast cells, contrary to the lipid-free form. The chain is Venom nerve growth factor 2 from Notechis scutatus scutatus (Mainland tiger snake).